The primary structure comprises 623 residues: Chaperone protein HtpG (623 aa).

Residues 1 to 326 (MAEEKRQFQA…SQDLPLNVSR (326 aa)) form an a; substrate-binding region. The segment at 327-543 (EMLQHNPVLS…EGEMSMHLEK (217 aa)) is b. The tract at residues 544–623 (MLRAHNQAPG…VSVMEKGLLG (80 aa)) is c.

The protein belongs to the heat shock protein 90 family. As to quaternary structure, homodimer.

The protein localises to the cytoplasm. In terms of biological role, molecular chaperone. Has ATPase activity. The sequence is that of Chaperone protein HtpG from Paramagnetospirillum magneticum (strain ATCC 700264 / AMB-1) (Magnetospirillum magneticum).